The primary structure comprises 164 residues: C-phycoerythrin alpha chain (164 aa).

Residues Cys82 and Cys139 each contribute to the (2R,3E)-phycoerythrobilin site.

Belongs to the phycobiliprotein family. As to quaternary structure, heterodimer of an alpha and a beta chain. Post-translationally, contains two covalently linked bilin chromophores.

It is found in the cellular thylakoid membrane. Functionally, light-harvesting photosynthetic bile pigment-protein from the phycobiliprotein complex. The sequence is that of C-phycoerythrin alpha chain (cpeA) from Pseudanabaena tenuis (strain PCC 7409).